We begin with the raw amino-acid sequence, 1165 residues long: Chromosome partition protein Smc (1165 aa).

32–39 (PNGSGKSN) is a binding site for ATP. Residues 161 to 503 (AGVAEFDRKI…ETQRQVWREA (343 aa)) adopt a coiled-coil conformation. In terms of domain architecture, SMC hinge spans 518-630 (QGVHGLISQL…VFRSLELARR (113 aa)). Coiled coils occupy residues 672 to 901 (ELAE…LQQR) and 946 to 1010 (DLSL…DCDT).

This sequence belongs to the SMC family. As to quaternary structure, homodimer.

Its subcellular location is the cytoplasm. Functionally, required for chromosome condensation and partitioning. This chain is Chromosome partition protein Smc, found in Gloeobacter violaceus (strain ATCC 29082 / PCC 7421).